The following is a 178-amino-acid chain: ATP synthase subunit delta (178 aa).

It belongs to the ATPase delta chain family. As to quaternary structure, F-type ATPases have 2 components, F(1) - the catalytic core - and F(0) - the membrane proton channel. F(1) has five subunits: alpha(3), beta(3), gamma(1), delta(1), epsilon(1). F(0) has three main subunits: a(1), b(2) and c(10-14). The alpha and beta chains form an alternating ring which encloses part of the gamma chain. F(1) is attached to F(0) by a central stalk formed by the gamma and epsilon chains, while a peripheral stalk is formed by the delta and b chains.

The protein localises to the cell inner membrane. In terms of biological role, f(1)F(0) ATP synthase produces ATP from ADP in the presence of a proton or sodium gradient. F-type ATPases consist of two structural domains, F(1) containing the extramembraneous catalytic core and F(0) containing the membrane proton channel, linked together by a central stalk and a peripheral stalk. During catalysis, ATP synthesis in the catalytic domain of F(1) is coupled via a rotary mechanism of the central stalk subunits to proton translocation. Its function is as follows. This protein is part of the stalk that links CF(0) to CF(1). It either transmits conformational changes from CF(0) to CF(1) or is implicated in proton conduction. In Pelodictyon phaeoclathratiforme (strain DSM 5477 / BU-1), this protein is ATP synthase subunit delta.